The sequence spans 504 residues: GTPase Obg (504 aa).

The region spanning 2-159 (SQFVDRVVLH…KDVTLELKSM (158 aa)) is the Obg domain. A disordered region spans residues 68–88 (AERGNNGAGDDRHGARGKDLT). One can recognise an OBG-type G domain in the interval 160–340 (ADVGLVGFPS…LRFALMDIVR (181 aa)). GTP is bound by residues 166-173 (GFPSAGKS), 191-195 (FTTLA), 212-215 (DVPG), 292-295 (NKMD), and 321-323 (STV). Mg(2+)-binding residues include Ser-173 and Thr-193. The region spanning 364 to 444 (KRKGRFADFE…IGGITFEWDP (81 aa)) is the OCT domain. The disordered stretch occupies residues 449-481 (GVDQTPAYGRGKDRRLEQTDRVTAEQRKRASQA). A compositionally biased stretch (basic and acidic residues) spans 458–476 (RGKDRRLEQTDRVTAEQRK).

This sequence belongs to the TRAFAC class OBG-HflX-like GTPase superfamily. OBG GTPase family. Monomer. It depends on Mg(2+) as a cofactor.

Its subcellular location is the cytoplasm. Functionally, an essential GTPase which binds GTP, GDP and possibly (p)ppGpp with moderate affinity, with high nucleotide exchange rates and a fairly low GTP hydrolysis rate. Plays a role in control of the cell cycle, stress response, ribosome biogenesis and in those bacteria that undergo differentiation, in morphogenesis control. The chain is GTPase Obg from Corynebacterium urealyticum (strain ATCC 43042 / DSM 7109).